We begin with the raw amino-acid sequence, 478 residues long: Protein ZINC INDUCED FACILITATOR-LIKE 1 (478 aa).

Transmembrane regions (helical) follow at residues Ile-43 to Ile-63, Phe-81 to Ala-101, Pro-108 to Leu-128, Phe-130 to Ile-150, Ala-169 to Ala-189, Phe-208 to Ser-228, Ile-280 to Trp-300, Val-317 to Ser-337, Ile-346 to Ala-367, Val-378 to Ile-398, Ile-415 to Phe-435, and Val-453 to Leu-473.

The protein belongs to the major facilitator superfamily. Predominantly expressed in roots and stomatal guard cells. Detected in anther stamen filaments and shoot apical meristem. In the mature portion of roots, restricted to the cortex. At the root tip, highly expressed in both the cortical and epidermal cell layers of the apical meristem and the transition zone, while absent from the quiescent center or the columella cells. Not detected in lateral root primordia.

It localises to the cell membrane. Its subcellular location is the vacuole membrane. In terms of biological role, major facilitator superfamily (MFS) transporter probably involved in 2,4-dichlorophenoxyacetic acid (2,4-D) export. K(+) may be the physiological substrate of the transporter. Modulates root auxin-related processes. Involved in auxin efflux and acts as a positive regulator of shootward transport at the root apex. May mediate proton efflux from the vacuolar compartment. Functionally, mediates drought stress tolerance by regulating stomatal closure. This Arabidopsis thaliana (Mouse-ear cress) protein is Protein ZINC INDUCED FACILITATOR-LIKE 1 (ZIFL1).